Reading from the N-terminus, the 134-residue chain is Putative toxin MJ0605 (134 aa).

The protein belongs to the UPF0332 family.

In terms of biological role, putative toxin component of a putative type VII toxin-antitoxin (TA) system. Its cognate antitoxin might be MJ0604. This chain is Putative toxin MJ0605, found in Methanocaldococcus jannaschii (strain ATCC 43067 / DSM 2661 / JAL-1 / JCM 10045 / NBRC 100440) (Methanococcus jannaschii).